A 416-amino-acid chain; its full sequence is CinA-like protein (416 aa).

This sequence belongs to the CinA family.

In Thermosynechococcus vestitus (strain NIES-2133 / IAM M-273 / BP-1), this protein is CinA-like protein.